The primary structure comprises 71 residues: UPF0346 protein BcerKBAB4_2120 (71 aa).

Belongs to the UPF0346 family.

The polypeptide is UPF0346 protein BcerKBAB4_2120 (Bacillus mycoides (strain KBAB4) (Bacillus weihenstephanensis)).